The chain runs to 121 residues: Large ribosomal subunit protein bL20c (121 aa).

This sequence belongs to the bacterial ribosomal protein bL20 family.

The protein localises to the plastid. The protein resides in the chloroplast. In terms of biological role, binds directly to 23S ribosomal RNA and is necessary for the in vitro assembly process of the 50S ribosomal subunit. It is not involved in the protein synthesizing functions of that subunit. The protein is Large ribosomal subunit protein bL20c of Lotus japonicus (Lotus corniculatus var. japonicus).